A 529-amino-acid polypeptide reads, in one-letter code: GMP synthase [glutamine-hydrolyzing] (529 aa).

One can recognise a Glutamine amidotransferase type-1 domain in the interval 9–211 (RILILDFGSQ…VKDICGCECL (203 aa)). Residue C86 is the Nucleophile of the active site. Residues H185 and E187 contribute to the active site. One can recognise a GMPS ATP-PPase domain in the interval 212-404 (WTPATIIDDA…LGLPYDMLYR (193 aa)). ATP is bound at residue 239–245 (SGGVDSS).

In terms of assembly, homodimer.

The enzyme catalyses XMP + L-glutamine + ATP + H2O = GMP + L-glutamate + AMP + diphosphate + 2 H(+). Its pathway is purine metabolism; GMP biosynthesis; GMP from XMP (L-Gln route): step 1/1. Catalyzes the synthesis of GMP from XMP. The protein is GMP synthase [glutamine-hydrolyzing] of Aeromonas hydrophila subsp. hydrophila (strain ATCC 7966 / DSM 30187 / BCRC 13018 / CCUG 14551 / JCM 1027 / KCTC 2358 / NCIMB 9240 / NCTC 8049).